A 405-amino-acid polypeptide reads, in one-letter code: Tyrosine--tRNA ligase (405 aa).

The short motif at 48-57 (PSRPDLHLGH) is the 'HIGH' region element. A 'KMSKS' region motif is present at residues 232–236 (KMSKS). Lysine 235 contributes to the ATP binding site. The S4 RNA-binding domain maps to 339–400 (LPLVDLLTTL…AGKRKFFRIA (62 aa)).

This sequence belongs to the class-I aminoacyl-tRNA synthetase family. TyrS type 2 subfamily. As to quaternary structure, homodimer.

It is found in the cytoplasm. The enzyme catalyses tRNA(Tyr) + L-tyrosine + ATP = L-tyrosyl-tRNA(Tyr) + AMP + diphosphate + H(+). In terms of biological role, catalyzes the attachment of tyrosine to tRNA(Tyr) in a two-step reaction: tyrosine is first activated by ATP to form Tyr-AMP and then transferred to the acceptor end of tRNA(Tyr). This is Tyrosine--tRNA ligase from Chlorobium luteolum (strain DSM 273 / BCRC 81028 / 2530) (Pelodictyon luteolum).